Here is a 152-residue protein sequence, read N- to C-terminus: Small ribosomal subunit protein uS11 (152 aa).

The tract at residues 133–152 is disordered; it reads VTPIPTDSTRRKSGHRGRRL. Basic residues predominate over residues 143-152; sequence RKSGHRGRRL.

This sequence belongs to the universal ribosomal protein uS11 family. In terms of assembly, component of the small ribosomal subunit. Part of the small subunit (SSU) processome, composed of more than 70 proteins and the RNA chaperone small nucleolar RNA (snoRNA) U3.

The protein resides in the cytoplasm. Its subcellular location is the nucleus. It is found in the nucleolus. Its function is as follows. Component of the small ribosomal subunit. The ribosome is a large ribonucleoprotein complex responsible for the synthesis of proteins in the cell. Part of the small subunit (SSU) processome, first precursor of the small eukaryotic ribosomal subunit. During the assembly of the SSU processome in the nucleolus, many ribosome biogenesis factors, an RNA chaperone and ribosomal proteins associate with the nascent pre-rRNA and work in concert to generate RNA folding, modifications, rearrangements and cleavage as well as targeted degradation of pre-ribosomal RNA by the RNA exosome. The sequence is that of Small ribosomal subunit protein uS11 (rps14) from Dictyostelium discoideum (Social amoeba).